A 468-amino-acid chain; its full sequence is Secreted triacylglycerol lipase LIP7 (468 aa).

A signal peptide spans 1-21 (MFPRQILVFAALGLCFALVAG). A disulfide bond links C125 and C295. S209 acts as the Nucleophile in catalysis. Active-site residues include D355 and H389.

The protein belongs to the AB hydrolase superfamily. Lipase family. Class Lip subfamily.

The protein resides in the secreted. It is found in the cell wall. The catalysed reaction is a triacylglycerol + H2O = a diacylglycerol + a fatty acid + H(+). The enzyme catalyses a monoacylglycerol + H2O = glycerol + a fatty acid + H(+). It catalyses the reaction a diacylglycerol + H2O = a monoacylglycerol + a fatty acid + H(+). Its function is as follows. Secreted lipase involved in Dandruff and seborrheic dermatitis (D/SD) probably via lipase-mediated breakdown of sebaceous lipids and release of irritating free fatty acids. Has triacylglycerol lipase activity and is able to hydrolyze triolein. Mostly converts monoolein to di- and triolein, while free fatty acids are only produced in low amounts. The polypeptide is Secreted triacylglycerol lipase LIP7 (Malassezia globosa (strain ATCC MYA-4612 / CBS 7966) (Dandruff-associated fungus)).